The following is a 263-amino-acid chain: uncharacterized protein (263 aa).

The first 22 residues, 1–22, serve as a signal peptide directing secretion; the sequence is MRYLKRVVLYRIVMVLSVFIIG. C23 carries the N-palmitoyl cysteine lipid modification. C23 carries S-diacylglycerol cysteine lipidation.

The protein belongs to the staphylococcal tandem lipoprotein family.

The protein resides in the cell membrane. This is an uncharacterized protein from Staphylococcus aureus (strain bovine RF122 / ET3-1).